Here is a 38-residue protein sequence, read N- to C-terminus: Trypsin inhibitor 2 (38 aa).

At glutamine 1 the chain carries Pyrrolidone carboxylic acid.

In terms of processing, contains disulfide bonds.

Inhibits trypsin-like proteases from the guts of the insect pests P.truncatus, P.americana, Acheta sp and Gryllus sp. This is Trypsin inhibitor 2 from Opuntia streptacantha (Prickly pear cactus).